We begin with the raw amino-acid sequence, 339 residues long: DNA-directed RNA polymerase subunit alpha (339 aa).

Residues 1-233 (MVREEVAGST…DLFLPFLHAE (233 aa)) form an alpha N-terminal domain (alpha-NTD) region. An alpha C-terminal domain (alpha-CTD) region spans residues 266–339 (GIPLNCIFID…IDLLKNKLSF (74 aa)).

It belongs to the RNA polymerase alpha chain family. In terms of assembly, in plastids the minimal PEP RNA polymerase catalytic core is composed of four subunits: alpha, beta, beta', and beta''. When a (nuclear-encoded) sigma factor is associated with the core the holoenzyme is formed, which can initiate transcription.

It localises to the plastid. The protein localises to the chloroplast. It catalyses the reaction RNA(n) + a ribonucleoside 5'-triphosphate = RNA(n+1) + diphosphate. Functionally, DNA-dependent RNA polymerase catalyzes the transcription of DNA into RNA using the four ribonucleoside triphosphates as substrates. The polypeptide is DNA-directed RNA polymerase subunit alpha (Hordeum bulbosum (Bulbous barley)).